Reading from the N-terminus, the 444-residue chain is UDP-N-acetylmuramoylalanine--D-glutamate ligase (444 aa).

Residue 118 to 124 participates in ATP binding; sequence GTNGKTT.

Belongs to the MurCDEF family.

Its subcellular location is the cytoplasm. It catalyses the reaction UDP-N-acetyl-alpha-D-muramoyl-L-alanine + D-glutamate + ATP = UDP-N-acetyl-alpha-D-muramoyl-L-alanyl-D-glutamate + ADP + phosphate + H(+). It participates in cell wall biogenesis; peptidoglycan biosynthesis. In terms of biological role, cell wall formation. Catalyzes the addition of glutamate to the nucleotide precursor UDP-N-acetylmuramoyl-L-alanine (UMA). This Protochlamydia amoebophila (strain UWE25) protein is UDP-N-acetylmuramoylalanine--D-glutamate ligase.